Reading from the N-terminus, the 216-residue chain is Orotate phosphoribosyltransferase (216 aa).

Lysine 30 contributes to the 5-phospho-alpha-D-ribose 1-diphosphate binding site. Residue 38–39 participates in orotate binding; it reads FF. 5-phospho-alpha-D-ribose 1-diphosphate is bound by residues 75 to 76, arginine 102, lysine 103, lysine 106, histidine 108, and 128 to 136; these read YK and DDVITAGTA. Threonine 132 and arginine 160 together coordinate orotate.

Belongs to the purine/pyrimidine phosphoribosyltransferase family. PyrE subfamily. Homodimer. It depends on Mg(2+) as a cofactor.

The catalysed reaction is orotidine 5'-phosphate + diphosphate = orotate + 5-phospho-alpha-D-ribose 1-diphosphate. It functions in the pathway pyrimidine metabolism; UMP biosynthesis via de novo pathway; UMP from orotate: step 1/2. Functionally, catalyzes the transfer of a ribosyl phosphate group from 5-phosphoribose 1-diphosphate to orotate, leading to the formation of orotidine monophosphate (OMP). The chain is Orotate phosphoribosyltransferase from Acinetobacter baylyi (strain ATCC 33305 / BD413 / ADP1).